A 98-amino-acid polypeptide reads, in one-letter code: Protein S100-A13 (98 aa).

In terms of domain architecture, EF-hand spans Ser18 to Val53. Ser32, Glu37, Asp64, Asn66, Asp68, Glu70, and Glu75 together coordinate Ca(2+). Ser32 bears the Phosphoserine mark.

The protein belongs to the S-100 family. In terms of assembly, homodimer. Part of a copper-dependent multiprotein complex containing S100A13, FGF1 and SYT1. Interacts with FGF1 and SYT1. Interacts with IL1A.

The protein resides in the cytoplasm. Its subcellular location is the secreted. Functionally, plays a role in the export of proteins that lack a signal peptide and are secreted by an alternative pathway. Binds two calcium ions per subunit. Binds one copper ion. Binding of one copper ion does not interfere with calcium binding. Required for the copper-dependent stress-induced export of IL1A and FGF1. The calcium-free protein binds to lipid vesicles containing phosphatidylserine, but not to vesicles containing phosphatidylcholine. The sequence is that of Protein S100-A13 (S100a13) from Mus musculus (Mouse).